The primary structure comprises 287 residues: MKKKNHKYRGKKLNRGESPNFSGQHLMHNKKLIEEIVDRANISIDDTVLELGAGKGALTTVLSQKAGKVLAVENDSKFVDILTRKTAQHSNTKIIHQDIMKIHLPKEKFVVVSNIPYAITTPIMKMLLNNPASGFQKGIIVMEKGAAKRFTSKFIKNSYVLAWRMWFDIGIVREISKEHFSPPPKVDSAMVRITRKKDAPLSHKHYIAFRGLAEYALKEPNIPLCVALRGIFTPRQMKHLRKSLKINNEKTVGTLTENQWAVIFNTMTQYVMHHKWPRANKRKPGEI.

Over residues 1 to 13 (MKKKNHKYRGKKL) the composition is skewed to basic residues. The disordered stretch occupies residues 1–21 (MKKKNHKYRGKKLNRGESPNF). 6 residues coordinate S-adenosyl-L-methionine: histidine 25, methionine 27, glycine 52, glutamate 73, aspartate 98, and asparagine 114.

This sequence belongs to the class I-like SAM-binding methyltransferase superfamily. rRNA adenine N(6)-methyltransferase family.

Functionally, involved in erythromycin resistance. The polypeptide is rRNA adenine N-6-methyltransferase (ermD) (Bacillus licheniformis).